The following is a 184-amino-acid chain: GTP cyclohydrolase 1 (184 aa).

Cysteine 74, histidine 77, and cysteine 145 together coordinate Zn(2+).

The protein belongs to the GTP cyclohydrolase I family. As to quaternary structure, toroid-shaped homodecamer, composed of two pentamers of five dimers.

It catalyses the reaction GTP + H2O = 7,8-dihydroneopterin 3'-triphosphate + formate + H(+). It participates in cofactor biosynthesis; 7,8-dihydroneopterin triphosphate biosynthesis; 7,8-dihydroneopterin triphosphate from GTP: step 1/1. The polypeptide is GTP cyclohydrolase 1 (folE) (Aquifex aeolicus (strain VF5)).